We begin with the raw amino-acid sequence, 357 residues long: 3-isopropylmalate dehydrogenase (357 aa).

NAD(+) is bound at residue 76-89 (GPKWDDLPSEKRPE). The substrate site is built by Arg-96, Arg-106, Arg-135, and Asp-224. Residues Asp-224, Asp-248, and Asp-252 each coordinate Mg(2+). 282–294 (GSAPDIAGQDKAN) is a binding site for NAD(+).

It belongs to the isocitrate and isopropylmalate dehydrogenases family. LeuB type 1 subfamily. Homodimer. Mg(2+) is required as a cofactor. Mn(2+) serves as cofactor.

The protein resides in the cytoplasm. The catalysed reaction is (2R,3S)-3-isopropylmalate + NAD(+) = 4-methyl-2-oxopentanoate + CO2 + NADH. It participates in amino-acid biosynthesis; L-leucine biosynthesis; L-leucine from 3-methyl-2-oxobutanoate: step 3/4. Catalyzes the oxidation of 3-carboxy-2-hydroxy-4-methylpentanoate (3-isopropylmalate) to 3-carboxy-4-methyl-2-oxopentanoate. The product decarboxylates to 4-methyl-2 oxopentanoate. The sequence is that of 3-isopropylmalate dehydrogenase from Nitratidesulfovibrio vulgaris (strain ATCC 29579 / DSM 644 / CCUG 34227 / NCIMB 8303 / VKM B-1760 / Hildenborough) (Desulfovibrio vulgaris).